Consider the following 89-residue polypeptide: Small ribosomal subunit protein uS15 (89 aa).

It belongs to the universal ribosomal protein uS15 family. In terms of assembly, part of the 30S ribosomal subunit. Forms a bridge to the 50S subunit in the 70S ribosome, contacting the 23S rRNA.

One of the primary rRNA binding proteins, it binds directly to 16S rRNA where it helps nucleate assembly of the platform of the 30S subunit by binding and bridging several RNA helices of the 16S rRNA. Its function is as follows. Forms an intersubunit bridge (bridge B4) with the 23S rRNA of the 50S subunit in the ribosome. In Staphylococcus saprophyticus subsp. saprophyticus (strain ATCC 15305 / DSM 20229 / NCIMB 8711 / NCTC 7292 / S-41), this protein is Small ribosomal subunit protein uS15.